Reading from the N-terminus, the 333-residue chain is Fructose-1,6-bisphosphatase class 1 (333 aa).

4 residues coordinate Mg(2+): Glu89, Asp112, Leu114, and Asp115. Substrate-binding positions include 115-118 (DGSS), Asn208, Tyr241, and Lys271. A Mg(2+)-binding site is contributed by Glu277.

The protein belongs to the FBPase class 1 family. In terms of assembly, homotetramer. Requires Mg(2+) as cofactor.

Its subcellular location is the cytoplasm. The catalysed reaction is beta-D-fructose 1,6-bisphosphate + H2O = beta-D-fructose 6-phosphate + phosphate. Its pathway is carbohydrate biosynthesis; gluconeogenesis. The sequence is that of Fructose-1,6-bisphosphatase class 1 from Haemophilus influenzae (strain ATCC 51907 / DSM 11121 / KW20 / Rd).